The following is an 812-amino-acid chain: Valine--tRNA ligase (812 aa).

The short motif at 47-57 (PTISGQLHIGH) is the 'HIGH' region element. The short motif at 536–540 (KMSKS) is the 'KMSKS' region element. Position 539 (Lys539) interacts with ATP.

This sequence belongs to the class-I aminoacyl-tRNA synthetase family. ValS type 2 subfamily. As to quaternary structure, monomer.

It localises to the cytoplasm. It catalyses the reaction tRNA(Val) + L-valine + ATP = L-valyl-tRNA(Val) + AMP + diphosphate. Its function is as follows. Catalyzes the attachment of valine to tRNA(Val). As ValRS can inadvertently accommodate and process structurally similar amino acids such as threonine, to avoid such errors, it has a 'posttransfer' editing activity that hydrolyzes mischarged Thr-tRNA(Val) in a tRNA-dependent manner. The protein is Valine--tRNA ligase of Ehrlichia ruminantium (strain Gardel).